A 167-amino-acid chain; its full sequence is Menaquinol:cytochrome c reductase iron-sulfur subunit (167 aa).

A Rieske domain is found at 59-158 (TKEPQRFDFK…QEVKDGFLYL (100 aa)). The [2Fe-2S] cluster site is built by Cys-100, His-102, Cys-121, and His-124. Residues Cys-105 and Cys-123 are joined by a disulfide bond.

This sequence belongs to the Rieske iron-sulfur protein family. The main subunits of the menaquinol:cytochrome c complex are a Rieske-type iron-sulfur protein (QcrA), a cytochrome b (QcrB) and a cytochrome c (QcrC). [2Fe-2S] cluster is required as a cofactor.

Functionally, component of the menaquinol:cytochrome c reductase complex. The Rieske protein is a high potential 2Fe-2S protein. The chain is Menaquinol:cytochrome c reductase iron-sulfur subunit (qcrA) from Bacillus subtilis (strain 168).